The following is a 98-amino-acid chain: Cell cycle protein GpsB (98 aa).

A coiled-coil region spans residues 34 to 71 (LDLIIKDYEAFQQEIDELRQENARLKRQVEELQKRPAM).

This sequence belongs to the GpsB family. As to quaternary structure, forms polymers through the coiled coil domains. Interacts with PBP1, MreC and EzrA.

It is found in the cytoplasm. Its function is as follows. Divisome component that associates with the complex late in its assembly, after the Z-ring is formed, and is dependent on DivIC and PBP2B for its recruitment to the divisome. Together with EzrA, is a key component of the system that regulates PBP1 localization during cell cycle progression. Its main role could be the removal of PBP1 from the cell pole after pole maturation is completed. Also contributes to the recruitment of PBP1 to the division complex. Not essential for septum formation. This chain is Cell cycle protein GpsB, found in Geobacillus kaustophilus (strain HTA426).